Here is a 372-residue protein sequence, read N- to C-terminus: MKYDLIIIGSGSVGAAAGYYATRAGLNVLMTDAHMPPHQHGSHHGDTRLIRHAYGEGEKYVPLVLRAQTLWDELSRHNEEDPIFVRSGVINLGPADSTFLANVAHSAEQWQLNVEKLDAQGIMARWPEIRVPDNYIGLFETDSGFLRSELAIKTWIQLAKEAGCAQLFNCPVTAIRHDDDGVTIETADGEYQAKKAIVCAGTWVKDLLPELPVQPVRKVFAWYQADGRYSVKNKFPAFTGELPNGDQYYGFPAENDALKIGKHNGGQVIHSADERVPFAEVASDGSEAFPFLRNVLPGIGCCLYGAACTYDNSPDEDFIIDTLPGHDNTLLITGLSGHGFKFASVLGEIAADFAQDKKSDFDLTPFRLSRFQ.

4–34 (DLIIIGSGSVGAAAGYYATRAGLNVLMTDAH) contacts FAD. Cys308 is modified (S-8alpha-FAD cysteine).

Belongs to the MSOX/MTOX family. MTOX subfamily. As to quaternary structure, monomer. Requires FAD as cofactor.

The enzyme catalyses N(alpha)-methyl-L-tryptophan + O2 + H2O = L-tryptophan + formaldehyde + H2O2. Its function is as follows. Catalyzes the oxidative demethylation of N-methyl-L-tryptophan. The polypeptide is N-methyl-L-tryptophan oxidase (Escherichia coli (strain K12 / DH10B)).